A 283-amino-acid polypeptide reads, in one-letter code: tRNA-cytidine(32) 2-sulfurtransferase (283 aa).

Residues 37-42 (SGGKDS) carry the PP-loop motif motif. The [4Fe-4S] cluster site is built by C112, C115, and C203.

Belongs to the TtcA family. As to quaternary structure, homodimer. Mg(2+) is required as a cofactor. The cofactor is [4Fe-4S] cluster.

It is found in the cytoplasm. The catalysed reaction is cytidine(32) in tRNA + S-sulfanyl-L-cysteinyl-[cysteine desulfurase] + AH2 + ATP = 2-thiocytidine(32) in tRNA + L-cysteinyl-[cysteine desulfurase] + A + AMP + diphosphate + H(+). It participates in tRNA modification. Functionally, catalyzes the ATP-dependent 2-thiolation of cytidine in position 32 of tRNA, to form 2-thiocytidine (s(2)C32). The sulfur atoms are provided by the cysteine/cysteine desulfurase (IscS) system. The polypeptide is tRNA-cytidine(32) 2-sulfurtransferase (Legionella pneumophila subsp. pneumophila (strain Philadelphia 1 / ATCC 33152 / DSM 7513)).